Consider the following 211-residue polypeptide: Protein-L-isoaspartate O-methyltransferase (211 aa).

Residue Ser60 is part of the active site.

The protein belongs to the methyltransferase superfamily. L-isoaspartyl/D-aspartyl protein methyltransferase family.

The protein localises to the cytoplasm. The enzyme catalyses [protein]-L-isoaspartate + S-adenosyl-L-methionine = [protein]-L-isoaspartate alpha-methyl ester + S-adenosyl-L-homocysteine. Catalyzes the methyl esterification of L-isoaspartyl residues in peptides and proteins that result from spontaneous decomposition of normal L-aspartyl and L-asparaginyl residues. It plays a role in the repair and/or degradation of damaged proteins. This chain is Protein-L-isoaspartate O-methyltransferase, found in Pseudomonas aeruginosa (strain LESB58).